Consider the following 82-residue polypeptide: Acyl carrier protein (82 aa).

In terms of domain architecture, Carrier spans 4–79 (EKIFQELKNI…DVVDIIESNL (76 aa)). An O-(pantetheine 4'-phosphoryl)serine modification is found at serine 39.

It belongs to the acyl carrier protein (ACP) family. 4'-phosphopantetheine is transferred from CoA to a specific serine of apo-ACP by AcpS. This modification is essential for activity because fatty acids are bound in thioester linkage to the sulfhydryl of the prosthetic group.

The protein resides in the cytoplasm. It functions in the pathway lipid metabolism; fatty acid biosynthesis. Functionally, carrier of the growing fatty acid chain in fatty acid biosynthesis. The sequence is that of Acyl carrier protein from Coprothermobacter proteolyticus (strain ATCC 35245 / DSM 5265 / OCM 4 / BT).